A 301-amino-acid polypeptide reads, in one-letter code: Nodulation protein D 3 (301 aa).

Residues 6–63 (LDLNLLVVLDALLTARNLTAAASSINLSQPAMSAAVARLRNYFNDELFTMSGRERVLT) form the HTH lysR-type domain. The H-T-H motif DNA-binding region spans 23 to 43 (LTAAASSINLSQPAMSAAVAR).

The protein belongs to the LysR transcriptional regulatory family.

Functionally, nodD regulates the expression of the nodABCFE genes which encode other nodulation proteins. NodD is also a negative regulator of its own expression. Binds flavonoids as inducers. The protein is Nodulation protein D 3 (nodD3) of Mesorhizobium japonicum (strain LMG 29417 / CECT 9101 / MAFF 303099) (Mesorhizobium loti (strain MAFF 303099)).